The following is a 207-amino-acid chain: Probable RNA 2'-phosphotransferase (207 aa).

It belongs to the KptA/TPT1 family.

Removes the 2'-phosphate from RNA via an intermediate in which the phosphate is ADP-ribosylated by NAD followed by a presumed transesterification to release the RNA and generate ADP-ribose 1''-2''-cyclic phosphate (APPR&gt;P). May function as an ADP-ribosylase. This is Probable RNA 2'-phosphotransferase from Methanosarcina acetivorans (strain ATCC 35395 / DSM 2834 / JCM 12185 / C2A).